Here is a 760-residue protein sequence, read N- to C-terminus: Ring-infected erythrocyte surface antigen (760 aa).

A disordered region spans residues 214–300 (DTSQEESVEE…SDVQQTSEAA (87 aa)). A compositionally biased stretch (acidic residues) spans 216–230 (SQEESVEENEEEHTV). Over residues 231-242 (DDEHVEEHTADD) the composition is skewed to basic and acidic residues. Over residues 243-256 (EHVEEPTVADDEHV) the composition is skewed to acidic residues. Over residues 262 to 288 (ADEHVEEPTVAEEHVEEPTVAEEHVEE) the composition is skewed to basic and acidic residues. The 69-residue stretch at 307 to 375 (DTLYYDILGV…KRWYNKYGYD (69 aa)) folds into the J domain. 3 N-linked (GlcNAc...) asparagine glycosylation sites follow: Asn425, Asn559, and Asn563. Positions 683–692 (EHDAEENVEH) are enriched in basic and acidic residues. The interval 683 to 738 (EHDAEENVEHDAEENAEENVEENVEEVEENVEENVEENVGEKKMRREEKKKRVQEP) is disordered. Over residues 693 to 720 (DAEENAEENVEENVEEVEENVEENVEEN) the composition is skewed to acidic residues.

Its subcellular location is the cell membrane. May disrupt the normal intermolecular interactions of the cytoplasmic domain of band 3 and thereby facilitate the invagination of the red cell membrane which is necessary for the formation of the parasitophorous vacuole. This is Ring-infected erythrocyte surface antigen (RESA) from Plasmodium falciparum (isolate NF7 / Ghana).